The primary structure comprises 753 residues: 5-methyltetrahydropteroyltriglutamate--homocysteine methyltransferase (753 aa).

Residues 17-20 (RELK) and lysine 117 each bind 5-methyltetrahydropteroyltri-L-glutamate. L-homocysteine contacts are provided by residues 431–433 (IGS) and glutamate 484. Residues 431 to 433 (IGS) and glutamate 484 contribute to the L-methionine site. Residues 515-516 (RC) and tryptophan 561 each bind 5-methyltetrahydropteroyltri-L-glutamate. Aspartate 599 contributes to the L-homocysteine binding site. Residue aspartate 599 coordinates L-methionine. Glutamate 605 provides a ligand contact to 5-methyltetrahydropteroyltri-L-glutamate. Histidine 641, cysteine 643, and glutamate 665 together coordinate Zn(2+). The Proton donor role is filled by histidine 694. Cysteine 726 serves as a coordination point for Zn(2+).

Belongs to the vitamin-B12 independent methionine synthase family. The cofactor is Zn(2+).

The enzyme catalyses 5-methyltetrahydropteroyltri-L-glutamate + L-homocysteine = tetrahydropteroyltri-L-glutamate + L-methionine. It functions in the pathway amino-acid biosynthesis; L-methionine biosynthesis via de novo pathway; L-methionine from L-homocysteine (MetE route): step 1/1. In terms of biological role, catalyzes the transfer of a methyl group from 5-methyltetrahydrofolate to homocysteine resulting in methionine formation. The protein is 5-methyltetrahydropteroyltriglutamate--homocysteine methyltransferase of Escherichia coli O8 (strain IAI1).